A 78-amino-acid polypeptide reads, in one-letter code: Acyl carrier protein (78 aa).

The Carrier domain maps to 1–76; it reads MALFEDIQAV…DVVKYIEDNK (76 aa). Ser36 bears the O-(pantetheine 4'-phosphoryl)serine mark.

Belongs to the acyl carrier protein (ACP) family. In terms of processing, 4'-phosphopantetheine is transferred from CoA to a specific serine of apo-ACP by AcpS. This modification is essential for activity because fatty acids are bound in thioester linkage to the sulfhydryl of the prosthetic group.

Its subcellular location is the cytoplasm. Its pathway is lipid metabolism; fatty acid biosynthesis. Its function is as follows. Carrier of the growing fatty acid chain in fatty acid biosynthesis. The protein is Acyl carrier protein of Helicobacter pylori (strain G27).